The following is a 97-amino-acid chain: Class II hydrophobin NC2 (97 aa).

Residues 1-17 (MQFTIATVLSLLTITLA) form the signal peptide. Disulfide bonds link cysteine 31/cysteine 79, cysteine 40/cysteine 70, cysteine 41/cysteine 53, and cysteine 80/cysteine 91. Asparagine 62 is a glycosylation site (N-linked (GlcNAc...) asparagine).

It belongs to the cerato-ulmin hydrophobin family. Homotrimer. Further self-assembles to form highly ordered films at water-air interfaces through intermolecular interactions.

It is found in the secreted. The protein localises to the cell wall. Its function is as follows. Aerial growth, conidiation, and dispersal of filamentous fungi in the environment rely upon a capability of their secreting small amphipathic proteins called hydrophobins (HPBs) with low sequence identity. Class I can self-assemble into an outermost layer of rodlet bundles on aerial cell surfaces, conferring cellular hydrophobicity that supports fungal growth, development and dispersal; whereas Class II form highly ordered films at water-air interfaces through intermolecular interactions but contribute nothing to the rodlet structure. NC2 is a class II hydrophobin that has the potential to adsorb to the hydrophobic interface at the hydrophobic-hydrophilic interface at very high rate but the predicted self-assembly NC2 film possesses a lower flexural rigidity than other class II hydrophobins such as HFBII from Hypocrea jecorina (also known as Trichoderma reesei). The protein is Class II hydrophobin NC2 of Neurospora crassa (strain ATCC 24698 / 74-OR23-1A / CBS 708.71 / DSM 1257 / FGSC 987).